The chain runs to 382 residues: Carbamoyl phosphate synthase small chain (382 aa).

Residues 1–189 (MIKSALLVLE…GLPEAKKEDE (189 aa)) are CPSase. 3 residues coordinate L-glutamine: serine 47, glycine 241, and glycine 243. One can recognise a Glutamine amidotransferase type-1 domain in the interval 193–380 (HVVAYDFGAK…IALIEQYRKT (188 aa)). Catalysis depends on cysteine 269, which acts as the Nucleophile. Leucine 270, glutamine 273, asparagine 311, glycine 313, and phenylalanine 314 together coordinate L-glutamine. Residues histidine 353 and glutamate 355 contribute to the active site.

This sequence belongs to the CarA family. As to quaternary structure, composed of two chains; the small (or glutamine) chain promotes the hydrolysis of glutamine to ammonia, which is used by the large (or ammonia) chain to synthesize carbamoyl phosphate. Tetramer of heterodimers (alpha,beta)4.

The catalysed reaction is hydrogencarbonate + L-glutamine + 2 ATP + H2O = carbamoyl phosphate + L-glutamate + 2 ADP + phosphate + 2 H(+). It carries out the reaction L-glutamine + H2O = L-glutamate + NH4(+). Its pathway is amino-acid biosynthesis; L-arginine biosynthesis; carbamoyl phosphate from bicarbonate: step 1/1. It participates in pyrimidine metabolism; UMP biosynthesis via de novo pathway; (S)-dihydroorotate from bicarbonate: step 1/3. Functionally, small subunit of the glutamine-dependent carbamoyl phosphate synthetase (CPSase). CPSase catalyzes the formation of carbamoyl phosphate from the ammonia moiety of glutamine, carbonate, and phosphate donated by ATP, constituting the first step of 2 biosynthetic pathways, one leading to arginine and/or urea and the other to pyrimidine nucleotides. The small subunit (glutamine amidotransferase) binds and cleaves glutamine to supply the large subunit with the substrate ammonia. This chain is Carbamoyl phosphate synthase small chain, found in Escherichia coli O6:H1 (strain CFT073 / ATCC 700928 / UPEC).